The primary structure comprises 382 residues: Two-component response regulator ARR14 (382 aa).

Positions Arg12–Val128 constitute a Response regulatory domain. The residue at position 63 (Asp63) is a 4-aspartylphosphate. A compositionally biased stretch (basic residues) spans Cys171–Ser181. The segment at Cys171–Leu193 is disordered. Positions Lys199–Arg202 match the Nuclear localization signal motif. The myb-like GARP DNA-binding region spans Arg202–Arg252.

This sequence belongs to the ARR family. Type-B subfamily. In terms of assembly, binds the target DNA as a monomer. In terms of processing, two-component system major event consists of a His-to-Asp phosphorelay between a sensor histidine kinase (HK) and a response regulator (RR). In plants, the His-to-Asp phosphorelay involves an additional intermediate named Histidine-containing phosphotransfer protein (HPt). This multistep phosphorelay consists of a His-Asp-His-Asp sequential transfer of a phosphate group between first a His and an Asp of the HK protein, followed by the transfer to a conserved His of the HPt protein and finally the transfer to an Asp in the receiver domain of the RR protein. In terms of tissue distribution, predominantly expressed in young leaf tissue.

The protein resides in the nucleus. Its function is as follows. Transcriptional activator that binds specifically to the DNA sequence 5'-[AG]GATT-3'. Functions as a response regulator involved in His-to-Asp phosphorelay signal transduction system. Phosphorylation of the Asp residue in the receiver domain activates the ability of the protein to promote the transcription of target genes. Could directly activate some type-A response regulators in response to cytokinins. The protein is Two-component response regulator ARR14 (ARR14) of Arabidopsis thaliana (Mouse-ear cress).